Reading from the N-terminus, the 863-residue chain is Glycogen phosphorylase (863 aa).

Lysine 618 is modified (N6-(pyridoxal phosphate)lysine).

Belongs to the glycogen phosphorylase family. Pyridoxal 5'-phosphate serves as cofactor.

The enzyme catalyses [(1-&gt;4)-alpha-D-glucosyl](n) + phosphate = [(1-&gt;4)-alpha-D-glucosyl](n-1) + alpha-D-glucose 1-phosphate. Phosphorylase is an important allosteric enzyme in carbohydrate metabolism. Enzymes from different sources differ in their regulatory mechanisms and in their natural substrates. However, all known phosphorylases share catalytic and structural properties. This Mycobacterium tuberculosis (strain CDC 1551 / Oshkosh) protein is Glycogen phosphorylase (glgP).